Here is an 835-residue protein sequence, read N- to C-terminus: U-box domain-containing protein 35 (835 aa).

Disordered stretches follow at residues 1 to 22 (MSRSPDKLALPPPPPPPPSRTV), 177 to 303 (VRPS…SSNR), and 410 to 457 (EKEK…LEGT). Residues 10 to 19 (LPPPPPPPPS) are compositionally biased toward pro residues. Residues 195–218 (RTNSSSGSSGPTSDSSDVMSSAHD) are compositionally biased toward low complexity. Positions 269–282 (SSINRSSTDTTSRW) are enriched in polar residues. Composition is skewed to basic and acidic residues over residues 285–295 (RRRDYEERKEA) and 410–455 (EKEK…EKLE). A coiled-coil region spans residues 340-459 (QSYTDNQVNL…EKEKLEGTLG (120 aa)). In terms of domain architecture, Protein kinase spans 480–745 (FSEELKIGMG…DLKDQILPAL (266 aa)). Residues 486–494 (IGMGAYGAV) and Lys507 each bind ATP. The active-site Proton acceptor is Asp602. Positions 765 to 835 (QPPTHFICPL…TAIMEWRSTR (71 aa)) constitute a U-box domain.

Belongs to the protein kinase superfamily. Ser/Thr protein kinase family.

The enzyme catalyses L-seryl-[protein] + ATP = O-phospho-L-seryl-[protein] + ADP + H(+). The catalysed reaction is L-threonyl-[protein] + ATP = O-phospho-L-threonyl-[protein] + ADP + H(+). It carries out the reaction S-ubiquitinyl-[E2 ubiquitin-conjugating enzyme]-L-cysteine + [acceptor protein]-L-lysine = [E2 ubiquitin-conjugating enzyme]-L-cysteine + N(6)-ubiquitinyl-[acceptor protein]-L-lysine.. It functions in the pathway protein modification; protein ubiquitination. In terms of biological role, functions as an E3 ubiquitin ligase. In Arabidopsis thaliana (Mouse-ear cress), this protein is U-box domain-containing protein 35 (PUB35).